The chain runs to 173 residues: CKLF-like MARVEL transmembrane domain-containing protein 8 (173 aa).

An MARVEL domain is found at 36-168 (FLRTLPGFLI…NTYFSFIAWR (133 aa)). A run of 4 helical transmembrane segments spans residues 40-60 (LPGF…TLIA), 70-90 (FGWV…FLII), 105-125 (TTVG…AAVV), and 147-167 (FFAF…FIAW).

It belongs to the chemokine-like factor family. Highly expressed in liver and pancreas.

The protein resides in the membrane. It localises to the cytoplasm. Its subcellular location is the nucleus. This chain is CKLF-like MARVEL transmembrane domain-containing protein 8 (CMTM8), found in Homo sapiens (Human).